Reading from the N-terminus, the 102-residue chain is ATP-dependent Clp protease adapter protein ClpS (102 aa).

The protein belongs to the ClpS family. Binds to the N-terminal domain of the chaperone ClpA.

Involved in the modulation of the specificity of the ClpAP-mediated ATP-dependent protein degradation. The polypeptide is ATP-dependent Clp protease adapter protein ClpS (Shewanella loihica (strain ATCC BAA-1088 / PV-4)).